The sequence spans 204 residues: Urease accessory protein UreG (204 aa).

10 to 17 (GPVGAGKT) lines the GTP pocket.

This sequence belongs to the SIMIBI class G3E GTPase family. UreG subfamily. In terms of assembly, homodimer. UreD, UreF and UreG form a complex that acts as a GTP-hydrolysis-dependent molecular chaperone, activating the urease apoprotein by helping to assemble the nickel containing metallocenter of UreC. The UreE protein probably delivers the nickel.

It localises to the cytoplasm. Facilitates the functional incorporation of the urease nickel metallocenter. This process requires GTP hydrolysis, probably effectuated by UreG. The protein is Urease accessory protein UreG of Bacillus sp. (strain TB-90).